Reading from the N-terminus, the 339-residue chain is 3-isopropylmalate dehydrogenase (339 aa).

Substrate-binding residues include Arg88, Arg98, Arg122, and Asp212. Asp212, Asp236, and Asp240 together coordinate Mg(2+). NAD(+) is bound at residue 272–284 (GSAPDIAGQGIAD).

This sequence belongs to the isocitrate and isopropylmalate dehydrogenases family. LeuB type 2 subfamily. In terms of assembly, homodimer. Mg(2+) serves as cofactor. It depends on Mn(2+) as a cofactor.

It is found in the cytoplasm. It catalyses the reaction (2R,3S)-3-isopropylmalate + NAD(+) = 4-methyl-2-oxopentanoate + CO2 + NADH. The protein operates within amino-acid biosynthesis; L-leucine biosynthesis; L-leucine from 3-methyl-2-oxobutanoate: step 3/4. Functionally, catalyzes the oxidation of 3-carboxy-2-hydroxy-4-methylpentanoate (3-isopropylmalate) to 3-carboxy-4-methyl-2-oxopentanoate. The product decarboxylates to 4-methyl-2 oxopentanoate. The polypeptide is 3-isopropylmalate dehydrogenase (Corynebacterium diphtheriae (strain ATCC 700971 / NCTC 13129 / Biotype gravis)).